Here is a 104-residue protein sequence, read N- to C-terminus: Large ribosomal subunit protein uL24 (104 aa).

It belongs to the universal ribosomal protein uL24 family. As to quaternary structure, part of the 50S ribosomal subunit.

One of two assembly initiator proteins, it binds directly to the 5'-end of the 23S rRNA, where it nucleates assembly of the 50S subunit. Its function is as follows. One of the proteins that surrounds the polypeptide exit tunnel on the outside of the subunit. This is Large ribosomal subunit protein uL24 from Shewanella baltica (strain OS223).